Here is a 463-residue protein sequence, read N- to C-terminus: Xanthone prenyltransferase B (463 aa).

This sequence belongs to the tryptophan dimethylallyltransferase family.

It functions in the pathway secondary metabolite biosynthesis. Mn(2+) and Co(2+) strongly enhance prenylation activity. In terms of biological role, dehydrogenase involved in the conversion of monodictyphenone to the prenyl xanthones such as emericellin, shamixanthone and epishamixanthone. Monodictyphenone is first converted to variecoxanthone A via a paeciloxanthone intermediate by the consecutive actions of the FAD-dependent monooxygenase mdpD and the xanthone prenyltransferase xptB. XptB catalyzes regular O-prenylation at the hydroxy group of C-7 of the xanthone ring. Variecoxanthone A is further prenylated to emericellin by xptA before being reduced to shamixanthone and epishamixanthone by the dehydrogenase xptC. The polypeptide is Xanthone prenyltransferase B (Emericella nidulans (strain FGSC A4 / ATCC 38163 / CBS 112.46 / NRRL 194 / M139) (Aspergillus nidulans)).